The sequence spans 365 residues: L-lactate oxidase (365 aa).

Residues 6–365 form the FMN hydroxy acid dehydrogenase domain; sequence RIPPGVWNAI…ITHDTLTPSC (360 aa). Tyr32 contributes to the pyruvate binding site. FMN-binding positions include 85–87, Ser114, and Gln135; that span reads PVA. Tyr137 is a binding site for pyruvate. 3 residues coordinate FMN: Thr163, Lys237, and Ser259. 2 residues coordinate pyruvate: His261 and Arg264. Residue His261 is the Proton acceptor of the active site. Residues 292–296 and Arg316 each bind FMN; that span reads DGGVR.

The protein belongs to the FMN-dependent alpha-hydroxy acid dehydrogenase family. In terms of assembly, homotetramer. Requires FMN as cofactor.

It catalyses the reaction (S)-lactate + O2 = pyruvate + H2O2. The catalysed reaction is glycolate + O2 = glyoxylate + H2O2. In terms of biological role, catalyzes the oxidation of (S)-lactate (L-lactate) to pyruvate, with a reduction of O2 to H2O2. To a lesser extent is also able to use glycolate as substrate. This chain is L-lactate oxidase, found in Alicycliphilus denitrificans (strain DSM 14773 / CIP 107495 / K601).